Here is a 469-residue protein sequence, read N- to C-terminus: Putative dipeptidase SSP1012 (469 aa).

His84 serves as a coordination point for Zn(2+). Asp86 is a catalytic residue. Asp115 lines the Zn(2+) pocket. The active-site Proton acceptor is Glu149. Glu150, Asp173, and His440 together coordinate Zn(2+).

This sequence belongs to the peptidase M20A family. Requires Zn(2+) as cofactor.

This chain is Putative dipeptidase SSP1012, found in Staphylococcus saprophyticus subsp. saprophyticus (strain ATCC 15305 / DSM 20229 / NCIMB 8711 / NCTC 7292 / S-41).